The sequence spans 336 residues: GTPase Obg (336 aa).

In terms of domain architecture, Obg spans 1–159 (MKFLDETKVY…KTIWLRLKLI (159 aa)). Positions 160–327 (ADAGLVGLPN…ALRALRSVIA (168 aa)) constitute an OBG-type G domain. GTP-binding positions include 166 to 173 (GLPNAGKS), 191 to 195 (FTTLH), 212 to 215 (DIPG), 279 to 282 (SQID), and 308 to 310 (SAV). 2 residues coordinate Mg(2+): Ser173 and Thr193.

Belongs to the TRAFAC class OBG-HflX-like GTPase superfamily. OBG GTPase family. Monomer. Mg(2+) serves as cofactor.

It is found in the cytoplasm. In terms of biological role, an essential GTPase which binds GTP, GDP and possibly (p)ppGpp with moderate affinity, with high nucleotide exchange rates and a fairly low GTP hydrolysis rate. Plays a role in control of the cell cycle, stress response, ribosome biogenesis and in those bacteria that undergo differentiation, in morphogenesis control. This is GTPase Obg from Rhizobium meliloti (strain 1021) (Ensifer meliloti).